The chain runs to 347 residues: Gas vesicle ATPase GvpN1 (347 aa).

Residues 1-11 (MTNESRKRKVR) are compositionally biased toward basic residues. The segment at 1-64 (MTNESRKRKV…EGFVPEEQSF (64 aa)) is disordered. Residues 18–55 (SRGDKKQGRSQSRDDKEIERLERQNDARGQESSTHVDE) are compositionally biased toward basic and acidic residues. ATP is bound at residue 91-98 (GPTGCGKT).

Belongs to the CbbQ/NirQ/NorQ/GpvN family. Forms homodimers, forms a GvpN1-GvpO1 heterodimer, interacts with GvpC1 (via the latter's C-terminus) and GvpL, might interact with GvpA1.

The protein resides in the gas vesicle. It is found in the cytoplasm. The catalysed reaction is ATP + H2O = ADP + phosphate + H(+). Its function is as follows. An ATPase that functions in gas vesicle formation. A minor component of the gas vesicle, also found in soluble extracts. Probably enhances gas vesicle formation. Gas vesicles are hollow, gas filled proteinaceous nanostructures found in several microbial planktonic microorganisms. They allow positioning of halobacteria at the optimal depth for growth in the poorly aerated, shallow brine pools of their habitat. Functionally, expression of a 9.5 kb p-vac DNA fragment containing 2 divergently transcribed regions (gvpD-gvpE-gvpF-gvpG-gvpH-gvpI-gvpJ-gvpK-gvpL-gvpM and gvpA-gvpC-gvpN-gvpO) allows H.volcanii to produce gas vesicles. A similar region restores gas vesicle production in H.halobium without the p-vac locus, but which still have the c-vac locus. The chain is Gas vesicle ATPase GvpN1 (gvpN11) from Halobacterium salinarum (strain ATCC 700922 / JCM 11081 / NRC-1) (Halobacterium halobium).